The sequence spans 158 residues: SsrA-binding protein (158 aa).

Residues 133–158 are disordered; sequence KIHDKRETEAKRDWNRQKQRLLKDNA. A compositionally biased stretch (basic and acidic residues) spans 136-158; it reads DKRETEAKRDWNRQKQRLLKDNA.

Belongs to the SmpB family.

The protein resides in the cytoplasm. Its function is as follows. Required for rescue of stalled ribosomes mediated by trans-translation. Binds to transfer-messenger RNA (tmRNA), required for stable association of tmRNA with ribosomes. tmRNA and SmpB together mimic tRNA shape, replacing the anticodon stem-loop with SmpB. tmRNA is encoded by the ssrA gene; the 2 termini fold to resemble tRNA(Ala) and it encodes a 'tag peptide', a short internal open reading frame. During trans-translation Ala-aminoacylated tmRNA acts like a tRNA, entering the A-site of stalled ribosomes, displacing the stalled mRNA. The ribosome then switches to translate the ORF on the tmRNA; the nascent peptide is terminated with the 'tag peptide' encoded by the tmRNA and targeted for degradation. The ribosome is freed to recommence translation, which seems to be the essential function of trans-translation. The sequence is that of SsrA-binding protein from Ruegeria pomeroyi (strain ATCC 700808 / DSM 15171 / DSS-3) (Silicibacter pomeroyi).